The primary structure comprises 329 residues: Ankyrin repeat and SOCS box protein 5 (329 aa).

ANK repeat units follow at residues 69 to 98 (ADRSPLHEAASQGRLLALRTLLSQGYNVNA), 102 to 131 (DHVTPLHEACLGDHVACARTLLEAGANVNA), 135 to 164 (DGVTPLFNACSQGSPSCAELLLEYGAKAQL), 167 to 196 (CLPSPTHEAASKGHHECLDILISWGIDVDQ), 200 to 229 (HLGTPLYVACMSQQFHCIWKLLYAGADVQK), and 232 to 261 (YWDTPLHAAAQQSSTEIVNLLLEFGADINA). One can recognise an SOCS box domain in the interval 278–329 (MVERILLQHEATPSSLYQLCRLCIRSYIGKPRLHLIPQLQLPTLLKNFLQYR).

It belongs to the ankyrin SOCS box (ASB) family.

It functions in the pathway protein modification; protein ubiquitination. Functionally, may be a substrate-recognition component of a SCF-like ECS (Elongin-Cullin-SOCS-box protein) E3 ubiquitin-protein ligase complex which mediates the ubiquitination and subsequent proteasomal degradation of target proteins. May play a role in the initiation of arteriogenesis. The polypeptide is Ankyrin repeat and SOCS box protein 5 (ASB5) (Homo sapiens (Human)).